The following is a 78-amino-acid chain: Surfactant-associated protein 2 (78 aa).

Positions 1-19 are cleaved as a signal peptide; that stretch reads MGSGLPLVLLLTLLGSSHG. The N-linked (GlcNAc...) asparagine glycan is linked to N37.

In terms of processing, N-glycosylated. Predominantly expressed in lung, where it is detected in type II pneumocytes in the alveolus, and in nonciliated epithelium in bronchioli (at protein level). Also detected at lower levels in cervix, esophagus, stomach, testis and kidney.

The protein localises to the secreted. It is found in the cytoplasmic vesicle. It localises to the secretory vesicle. The protein resides in the golgi apparatus. Functionally, putative surfactant protein. This chain is Surfactant-associated protein 2 (SFTA2), found in Homo sapiens (Human).